A 105-amino-acid polypeptide reads, in one-letter code: Small cysteine and glycine repeat-containing protein 6 (105 aa).

The interval 4-83 (CGCGGCGGGC…HSCGCGCGCG (80 aa)) is 13 X 2 AA repeats of CG.

It belongs to the KRTAP type 28 family.

In terms of biological role, in the hair cortex, hair keratin intermediate filaments are embedded in an interfilamentous matrix, consisting of hair keratin-associated proteins (KRTAP), which are essential for the formation of a rigid and resistant hair shaft through their extensive disulfide bond cross-linking with abundant cysteine residues of hair keratins. The matrix proteins include the high-sulfur and high-glycine-tyrosine keratins. In Homo sapiens (Human), this protein is Small cysteine and glycine repeat-containing protein 6.